The chain runs to 82 residues: MPKKTEQPVSFESSLNELEKIVTRLESGELPLDDALNEFEHGIQLARQGQQKLQQAEQRVQILLSDDPDAPLSPFTPDNDAL.

It belongs to the XseB family. In terms of assembly, heterooligomer composed of large and small subunits.

It localises to the cytoplasm. The catalysed reaction is Exonucleolytic cleavage in either 5'- to 3'- or 3'- to 5'-direction to yield nucleoside 5'-phosphates.. Its function is as follows. Bidirectionally degrades single-stranded DNA into large acid-insoluble oligonucleotides, which are then degraded further into small acid-soluble oligonucleotides. The protein is Exodeoxyribonuclease 7 small subunit of Pectobacterium carotovorum subsp. carotovorum (strain PC1).